The sequence spans 494 residues: NADPH:adrenodoxin oxidoreductase, mitochondrial (494 aa).

A mitochondrion-targeting transit peptide spans 1 to 34; the sequence is MAPRCWRWWSWSAWPGVRPLPSRSTPTPGFCKKF. Residues alanine 51, glutamate 72, leucine 80, and valine 116 each contribute to the FAD site. Residues 187-190, 231-232, and glutamate 243 contribute to the NADP(+) site; these read QGNV and RR. A Phosphoserine modification is found at serine 313. FAD-binding positions include tryptophan 401 and 408 to 410; that span reads GVI. Residue glycine 408 participates in NADP(+) binding.

Belongs to the ferredoxin--NADP reductase type 1 family. Monomer. Interacts directly with FDX1. It depends on FAD as a cofactor.

It localises to the mitochondrion inner membrane. It catalyses the reaction 2 reduced [adrenodoxin] + NADP(+) + H(+) = 2 oxidized [adrenodoxin] + NADPH. The catalysed reaction is 2 reduced [2Fe-2S]-[ferredoxin] + NADP(+) + H(+) = 2 oxidized [2Fe-2S]-[ferredoxin] + NADPH. The protein operates within steroid metabolism; cholesterol metabolism. Functionally, serves as the first electron transfer protein in all the mitochondrial P450 systems including cholesterol side chain cleavage in all steroidogenic tissues, steroid 11-beta hydroxylation in the adrenal cortex, 25-OH-vitamin D3-24 hydroxylation in the kidney, and sterol C-27 hydroxylation in the liver. Also acts as a ferredoxin--NADP(+) reductase essential for coenzyme Q biosynthesis: together with FDX2, transfers the electrons required for the hydroxylation reaction performed by COQ6. The protein is NADPH:adrenodoxin oxidoreductase, mitochondrial (Fdxr) of Rattus norvegicus (Rat).